Consider the following 402-residue polypeptide: Beta-peptidyl aminopeptidase BapA (402 aa).

Residues 1 to 29 (MTSTQRLWSGALPLLTALIVSIAATASLA) form the signal peptide. The active-site Nucleophile is the serine 279. Catalysis depends on proton donor/acceptor residues serine 317 and glutamate 319.

This sequence belongs to the peptidase S58 family. As to quaternary structure, heterooctamer of 4 heterodimers ((alpha:beta)4); each heterodimer is composed of an alpha subunit and a beta subunit processed from the same precursor. Autoproteolytic processing to generate the alpha and beta subunit is required for self-activation and is proposed to use a similar mechanism as substrate cleavage.

Its subcellular location is the periplasm. It carries out the reaction Cleaves N-terminal beta-homoamino acids from peptides composed of 2 to 6 amino acids.. Inhibited by AEBSF (4-(2-aminoethyl)benzenesulfonyl fluoride, Pefabloc SC), ampicillin and AMP(hyd) (ampillicin-derived penicilloic acid). Its function is as follows. Beta-aminopeptidase that can cleave synthetic beta-peptides which consist of backbone-elongated beta-amino acid residues that are not processed by common proteolytic enzymes. Can cleave the beta-peptides beta-homoVal-beta-homoAla-beta-homoLeu and beta-homoAla-beta-homoLeu. Requires a beta-amino acid at the N-terminus of peptide substrates and cleaves the peptide bond between the N-terminal beta-amino acid and the amino acid at the second position of tripeptidic substrates of the general structure H-betahXaa-Ile-betahTyr-OH according to the following preferences with regard to the side chain of the N-terminal beta-amino acid: aliphatic and aromatic &gt; OH-containing &gt; hydrogen, basic and polar. In Sphingosinicella xenopeptidilytica, this protein is Beta-peptidyl aminopeptidase BapA.